Reading from the N-terminus, the 96-residue chain is Large ribosomal subunit protein uL23 (96 aa).

The protein belongs to the universal ribosomal protein uL23 family. Part of the 50S ribosomal subunit. Contacts protein L29, and trigger factor when it is bound to the ribosome.

One of the early assembly proteins it binds 23S rRNA. One of the proteins that surrounds the polypeptide exit tunnel on the outside of the ribosome. Forms the main docking site for trigger factor binding to the ribosome. The sequence is that of Large ribosomal subunit protein uL23 from Bacillus mycoides (strain KBAB4) (Bacillus weihenstephanensis).